The primary structure comprises 264 residues: Methylthioribulose-1-phosphate dehydratase (264 aa).

Cysteine 110 contributes to the substrate binding site. Residues histidine 128 and histidine 130 each contribute to the Zn(2+) site. Glutamate 151 serves as the catalytic Proton donor/acceptor. Histidine 213 provides a ligand contact to Zn(2+).

Belongs to the aldolase class II family. MtnB subfamily. The cofactor is Zn(2+).

It is found in the cytoplasm. The catalysed reaction is 5-(methylsulfanyl)-D-ribulose 1-phosphate = 5-methylsulfanyl-2,3-dioxopentyl phosphate + H2O. It participates in amino-acid biosynthesis; L-methionine biosynthesis via salvage pathway; L-methionine from S-methyl-5-thio-alpha-D-ribose 1-phosphate: step 2/6. Functionally, catalyzes the dehydration of methylthioribulose-1-phosphate (MTRu-1-P) into 2,3-diketo-5-methylthiopentyl-1-phosphate (DK-MTP-1-P). In Vanderwaltozyma polyspora (strain ATCC 22028 / DSM 70294 / BCRC 21397 / CBS 2163 / NBRC 10782 / NRRL Y-8283 / UCD 57-17) (Kluyveromyces polysporus), this protein is Methylthioribulose-1-phosphate dehydratase.